The chain runs to 1222 residues: ATP-dependent helicase/nuclease subunit A (1222 aa).

The region spanning 39–495 (QKRTAQQIEA…ILLKENFRSQ (457 aa)) is the UvrD-like helicase ATP-binding domain. 60 to 67 (ASAGSGKT) is a binding site for ATP. The region spanning 524 to 810 (QLIAGSHAQT…NLMTIHKSKG (287 aa)) is the UvrD-like helicase C-terminal domain.

This sequence belongs to the helicase family. AddA subfamily. In terms of assembly, heterodimer of AddA and AddB/RexB. Requires Mg(2+) as cofactor.

The catalysed reaction is Couples ATP hydrolysis with the unwinding of duplex DNA by translocating in the 3'-5' direction.. The enzyme catalyses ATP + H2O = ADP + phosphate + H(+). In terms of biological role, the heterodimer acts as both an ATP-dependent DNA helicase and an ATP-dependent, dual-direction single-stranded exonuclease. Recognizes the chi site generating a DNA molecule suitable for the initiation of homologous recombination. The AddA nuclease domain is required for chi fragment generation; this subunit has the helicase and 3' -&gt; 5' nuclease activities. The chain is ATP-dependent helicase/nuclease subunit A from Streptococcus pyogenes serotype M2 (strain MGAS10270).